The chain runs to 547 residues: Phospholipase DDHD1 (547 aa).

Ser-184 is an active-site residue. In terms of domain architecture, DDHD spans 258 to 533 (LKFKVENFFC…ALFLLTFMYK (276 aa)). At Ser-370 the chain carries Phosphoserine. The tract at residues 414–448 (RSSASQPSEPSKDSLEDDKKPSASPSTTTVATQTL) is disordered. Basic and acidic residues predominate over residues 423–434 (PSKDSLEDDKKP). A compositionally biased stretch (low complexity) spans 435–448 (SASPSTTTVATQTL).

Belongs to the PA-PLA1 family. As to quaternary structure, forms homooligomers and, to a much smaller extent, heterooligomers with DDHD2. Interacts with SEC23A and SEC24C. Predominantly expressed in testis, in round and elongating spermatids, but not in spermatocytes (at protein level). Also expressed in the brain, and at lower levels in other tissues such as thymus and lung (at protein level).

Its subcellular location is the cytoplasm. It catalyses the reaction a 1,2-diacyl-sn-glycero-3-phosphate + H2O = a 2-acyl-sn-glycerol 3-phosphate + a fatty acid + H(+). It carries out the reaction a 1,2-diacyl-sn-glycero-3-phospho-(1D-myo-inositol) + H2O = a 2-acyl-sn-glycero-3-phospho-D-myo-inositol + a fatty acid + H(+). The enzyme catalyses 1-octadecanoyl-2-(5Z,8Z,11Z,14Z-eicosatetraenoyl)-sn-glycero-3-phospho-(1D-myo-inositol) + H2O = 2-(5Z,8Z,11Z,14Z-eicosatetraenoyl)-sn-glycero-3-phospho-(1D-myo-inositol) + octadecanoate + H(+). The catalysed reaction is a 1-acyl-2-(5Z,8Z,11Z,14Z-eicosatetraenoyl)-sn-glycero-3-phospho-(1D-myo-inositol) + H2O = 2-(5Z,8Z,11Z,14Z-eicosatetraenoyl)-sn-glycero-3-phospho-(1D-myo-inositol) + a fatty acid + H(+). It catalyses the reaction 1,2-dihexadecanoyl-sn-glycero-3-phospho-(1D-myo-inositol) + H2O = 2-hexadecanoyl-sn-glycero-3-phospho-(1D-myo-inositol) + hexadecanoate + H(+). It carries out the reaction a 1-acyl-2-(5Z,8Z,11Z,14Z)-eicosatetraenoyl-sn-glycero-3-phosphate + H2O = 2-(5Z,8Z,11Z,14Z-eicosatetraenoyl)-sn-glycero-3-phosphate + a fatty acid + H(+). The enzyme catalyses 1-(9Z-octadecenoyl)-2-(7Z,10Z,13Z,16Z,19Z-docosapentaenoyl)-sn-glycero-3-phospho-1D-myo-inositol + H2O = 2-(7Z,10Z,13Z,16Z,19Z-docosapentaenoyl)-sn-glycero-3-phospho-1D-myo-inositol + (9Z)-octadecenoate + H(+). The catalysed reaction is 1-(9Z-octadecenoyl)-2-(5Z,8Z,11Z,14Z-eicosatetraenoyl)-sn-glycero-3-phospho-1D-myo-inositol + H2O = 2-(5Z,8Z,11Z,14Z-eicosatetraenoyl)-sn-glycero-3-phospho-(1D-myo-inositol) + (9Z)-octadecenoate + H(+). It catalyses the reaction 1,2-di-(9Z-octadecenoyl)-sn-glycero-3-phospho-1D-myo-inositol + H2O = 2-(9Z-octadecenoyl)-sn-glycero-3-phospho-1D-myo-inositol + (9Z)-octadecenoate + H(+). It carries out the reaction 1-(9Z-octadecenoyl)-2-(8Z,11Z,14Z-eicosatrienoyl)-sn-glycero-3-phospho-1D-myo-inositol + H2O = 2-(8Z,11Z,14Z-eicosatrienoyl)-sn-glycero-3-phospho-1D-myo-inositol + (9Z)-octadecenoate + H(+). The enzyme catalyses 1,2-di-(9Z-octadecenoyl)-sn-glycero-3-phosphate + H2O = 2-(9Z-octadecenoyl)-sn-glycero-3-phosphate + (9Z)-octadecenoate + H(+). The catalysed reaction is 1-hexadecanoyl-2-(9Z-octadecenoyl)-sn-glycero-3-phosphate + H2O = 2-(9Z-octadecenoyl)-sn-glycero-3-phosphate + hexadecanoate + H(+). It catalyses the reaction 1-hexadecanoyl-2-(9Z-octadecenoyl)-sn-glycero-3-phospho-L-serine + H2O = 2-(9Z-octadecenoyl)-sn-glycero-3-phospho-L-serine + hexadecanoate + H(+). It carries out the reaction 1,2-di-(5Z,8Z,11Z,14Z)-eicosatetraenoyl-sn-glycero-3-phosphate + H2O = 2-(5Z,8Z,11Z,14Z-eicosatetraenoyl)-sn-glycero-3-phosphate + (5Z,8Z,11Z,14Z)-eicosatetraenoate + H(+). The enzyme catalyses 1-octadecanoyl-2-(5Z,8Z,11Z,14Z-eicosatetraenoyl)-sn-glycero-3-phosphate + H2O = 2-(5Z,8Z,11Z,14Z-eicosatetraenoyl)-sn-glycero-3-phosphate + octadecanoate + H(+). The catalysed reaction is a 1,2-diacyl-sn-glycero-3-phospho-L-serine + H2O = a 2-acyl-sn-glycero-3-phospho-L-serine + a fatty acid + H(+). It catalyses the reaction a 1,2-diacyl-sn-glycero-3-phosphocholine + H2O = a 2-acyl-sn-glycero-3-phosphocholine + a fatty acid + H(+). It carries out the reaction 1,2-di-(9Z-octadecenoyl)-sn-glycero-3-phosphocholine + H2O = (9Z-octadecenoyl)-sn-glycero-3-phosphocholine + (9Z)-octadecenoate + H(+). The enzyme catalyses a 1,2-diacyl-sn-glycero-3-phosphoethanolamine + H2O = a 2-acyl-sn-glycero-3-phosphoethanolamine + a fatty acid + H(+). The catalysed reaction is a 1,2-diacyl-sn-glycero-3-phospho-(1'-sn-glycerol) + H2O = 2-acyl-sn-glycero-3-phospho-(1'-sn-glycerol) + a fatty acid + H(+). It catalyses the reaction 1-hexadecanoyl-2-(9Z-octadecenoyl)-sn-glycero-3-phospho-(1'-sn-glycerol) + H2O = 2-(9Z-octadecenoyl)-sn-glycero-3-phospho-(1'-sn-glycerol) + hexadecanoate + H(+). It carries out the reaction 1-acyl-2-(5Z,8Z,11Z,14Z-eicosatetraenoyl)-sn-glycero-3-phosphocholine + H2O = 2-(5Z,8Z,11Z,14Z)-eicosatetraenoyl-sn-glycero-3-phosphocholine + a fatty acid + H(+). The enzyme catalyses 1-acyl-2-(5Z,8Z,11Z,14Z)-eicosatetraenoyl-sn-glycero-3-phosphoethanolamine + H2O = 2-(5Z,8Z,11Z,14Z)-eicosatetraenoyl-sn-glycero-3-phosphoethanolamine + a fatty acid + H(+). Its pathway is phospholipid metabolism; phosphatidylinositol metabolism. Phospholipase A1 (PLA1) that hydrolyzes ester bonds at the sn-1 position of glycerophospholipids producing a free fatty acid and a lysophospholipid. Prefers phosphatidate (1,2-diacyl-sn-glycero-3-phosphate, PA) as substrate in vitro, but can efficiently hydrolyze phosphatidylinositol (1,2-diacyl-sn-glycero-3-phospho-(1D-myo-inositol), PI), as well as a range of other glycerophospholipid substrates such as phosphatidylcholine (1,2-diacyl-sn-glycero-3-phosphocholine, PC), phosphatidylethanolamine (1,2-diacyl-sn-glycero-3-phosphoethanolamine, PE), phosphatidylserine (1,2-diacyl-sn-glycero-3-phospho-L-serine, PS) and phosphatidylglycerol (1,2-diacyl-sn-glycero-3-phospho-(1'-sn-glycerol), PG). Involved in the regulation of the endogenous content of polyunsaturated PI and PS lipids in the nervous system. Changes in these lipids extend to downstream metabolic products like PI phosphates PIP and PIP2, which play fundamental roles in cell biology. Regulates mitochondrial morphology. These dynamic changes may be due to PA hydrolysis at the mitochondrial surface. May play a regulatory role in spermatogenesis or sperm function. The sequence is that of Phospholipase DDHD1 from Mus musculus (Mouse).